A 335-amino-acid polypeptide reads, in one-letter code: Peroxidase 53 (335 aa).

An N-terminal signal peptide occupies residues 1–30 (MAVTNLPTCDGLFIISLIVIVSSIFGTSSA). Residue Q31 is modified to Pyrrolidone carboxylic acid. N-linked (GlcNAc...) asparagine glycosylation is found at N33 and N43. Disulfide bonds link C41–C121, C74–C79, C127–C329, and C206–C238. H72 acts as the Proton acceptor in catalysis. Residues D73, V76, G78, D80, and S82 each contribute to the Ca(2+) site. N-linked (GlcNAc...) asparagine glycosylation occurs at N165. A substrate-binding site is contributed by P169. The N-linked (GlcNAc...) asparagine glycan is linked to N177. Heme b is bound at residue H199. A Ca(2+)-binding site is contributed by T200. N-linked (GlcNAc...) asparagine glycans are attached at residues N215, N227, and N241. Positions 251, 254, and 259 each coordinate Ca(2+). A glycan (N-linked (GlcNAc...) asparagine) is linked at N297.

It belongs to the peroxidase family. Classical plant (class III) peroxidase subfamily. Ca(2+) is required as a cofactor. Requires heme b as cofactor. Mainly expressed in roots.

Its subcellular location is the secreted. It catalyses the reaction 2 a phenolic donor + H2O2 = 2 a phenolic radical donor + 2 H2O. Functionally, removal of H(2)O(2), oxidation of toxic reductants, biosynthesis and degradation of lignin, suberization, auxin catabolism, response to environmental stresses such as wounding, pathogen attack and oxidative stress. These functions might be dependent on each isozyme/isoform in each plant tissue. Its function is as follows. Closely linked to lignin formation by showing monolignol substrate specificity. The protein is Peroxidase 53 (PER53) of Arabidopsis thaliana (Mouse-ear cress).